The chain runs to 133 residues: MVMDIRVLTPDRVICSTTADEVILPGLTGQVGVLDGHATLITALDTGLLRIKLADKWTPIILCGGLAEIDRNRVTVLVNDVEELVAVELSEATKELEKATSAIENAETSKARLDASVELKKATARLEGINYLS.

The protein belongs to the ATPase epsilon chain family. F-type ATPases have 2 components, CF(1) - the catalytic core - and CF(0) - the membrane proton channel. CF(1) has five subunits: alpha(3), beta(3), gamma(1), delta(1), epsilon(1). CF(0) has three main subunits: a, b and c.

It localises to the plastid. The protein localises to the chloroplast thylakoid membrane. Functionally, produces ATP from ADP in the presence of a proton gradient across the membrane. The chain is ATP synthase epsilon chain, chloroplastic from Thalassiosira pseudonana (Marine diatom).